We begin with the raw amino-acid sequence, 109 residues long: Probable gas vesicle protein J1 (109 aa).

The protein belongs to the gas vesicle GvpA family. In terms of assembly, interacts with GvpA.

It is found in the gas vesicle. A minor component of the gas vesicle, might be involved in nucleating gas vesicle formation. Gas vesicles (GV) are hollow, gas filled proteinaceous nanostructures. It is not clear what function GVs perform in soil bacteria. This Streptomyces coelicolor (strain ATCC BAA-471 / A3(2) / M145) protein is Probable gas vesicle protein J1 (gvpJ1).